Here is a 957-residue protein sequence, read N- to C-terminus: Iron-responsive element-binding protein 2 (957 aa).

[4Fe-4S] cluster is bound by residues Cys506, Cys572, and Cys575.

Belongs to the aconitase/IPM isomerase family. [4Fe-4S] cluster serves as cofactor. Ubiquitinated and degraded by the proteasome in presence of high level of iron and oxygen.

The protein resides in the cytoplasm. Functionally, RNA-binding protein that binds to iron-responsive elements (IRES), which are stem-loop structures found in the 5'-UTR of ferritin, and delta aminolevulinic acid synthase mRNAs, and in the 3'-UTR of transferrin receptor mRNA. Binding to the IRE element in ferritin results in the repression of its mRNA translation. Binding of the protein to the transferrin receptor mRNA inhibits the degradation of this otherwise rapidly degraded mRNA. The sequence is that of Iron-responsive element-binding protein 2 (ireb2) from Xenopus tropicalis (Western clawed frog).